A 152-amino-acid polypeptide reads, in one-letter code: Globin CTT-E/E' (152 aa).

Positions 1-15 are cleaved as a signal peptide; that stretch reads MKFIILALCVAAASA. The region spanning 16 to 152 is the Globin domain; that stretch reads LSGDQIGLVQ…AFFGAVFAKM (137 aa). Heme b-binding residues include His73 and His102.

The protein belongs to the globin family.

This is Globin CTT-E/E' (CTT-E) from Chironomus thummi thummi (Midge).